The sequence spans 324 residues: MNMRFSPKALVRQLGRLSLVACLSLGLLGAADWLQPQAAAAYPFWAQENYASPREATGKIVCANCHLAKKPTEVEVPHSVLPDTVFKAVVKIPYDRSSQQVLGDGSKGGLNVGAVLMLPDGFKLAPEDRISEELKEEIGNVYFTNYSADQENIILVGPLPGDDHQEIVFPVLSPDPAKDKNVFFGKYQIHVGGNRGRGQVYPTGQKSNNGVYTASAAGVIDAVTETASGYDIVIRKADGSTVTDAVPAGPSPIVAVGSEVAAGAALTNDPNVGGFGQIDTEIVLQSSNRVLGVIAFFFAVMLAQIMLVLKKKQVEKVQAAELNF.

The N-terminal stretch at 1–30 (MNMRFSPKALVRQLGRLSLVACLSLGLLGA) is a signal peptide. Heme contacts are provided by tyrosine 42, cysteine 62, cysteine 65, and histidine 66. The helical transmembrane segment at 290-310 (VLGVIAFFFAVMLAQIMLVLK) threads the bilayer.

This sequence belongs to the cytochrome f family. The 4 large subunits of the cytochrome b6-f complex are cytochrome b6, subunit IV (17 kDa polypeptide, PetD), cytochrome f and the Rieske protein, while the 4 small subunits are PetG, PetL, PetM and PetN. The complex functions as a dimer. It depends on heme as a cofactor.

The protein localises to the cellular thylakoid membrane. Component of the cytochrome b6-f complex, which mediates electron transfer between photosystem II (PSII) and photosystem I (PSI), cyclic electron flow around PSI, and state transitions. This chain is Cytochrome f, found in Synechococcus elongatus (strain ATCC 33912 / PCC 7942 / FACHB-805) (Anacystis nidulans R2).